The sequence spans 467 residues: Dimethylamine methyltransferase MtbB3 (467 aa).

Residue pyrrolysine 356 is a non-standard amino acid, pyrrolysine.

This sequence belongs to the dimethylamine methyltransferase family.

The enzyme catalyses Co(I)-[dimethylamine-specific corrinoid protein] + dimethylamine + H(+) = methyl-Co(III)-[dimethylamine-specific corrinoid protein] + methylamine. Its pathway is one-carbon metabolism; methanogenesis from dimethylamine. Functionally, catalyzes the transfer of a methyl group from dimethylamine to the corrinoid cofactor of MtbC. The chain is Dimethylamine methyltransferase MtbB3 (mtbB3) from Methanosarcina acetivorans (strain ATCC 35395 / DSM 2834 / JCM 12185 / C2A).